The sequence spans 159 residues: Putative UPF0479 protein YDR545C-A (159 aa).

A run of 2 helical transmembrane segments spans residues 38-58 and 135-155; these read IVFCLPFFPALFLVPVQKVLQ and VPMIWLDVFQVFFVFLVISQH.

It belongs to the UPF0479 family.

The protein localises to the membrane. In Saccharomyces cerevisiae (strain ATCC 204508 / S288c) (Baker's yeast), this protein is Putative UPF0479 protein YDR545C-A.